Here is a 125-residue protein sequence, read N- to C-terminus: Protein AC4 (125 aa).

This sequence belongs to the geminiviridae protein AC4/C4 family.

Pathogenicity determinant. May act as a suppressor of RNA-mediated gene silencing, also known as post-transcriptional gene silencing (PTGS), a mechanism of plant viral defense that limits the accumulation of viral RNAs. This is Protein AC4 from Cucurbita moschata (Winter crookneck squash).